The primary structure comprises 28 residues: Cliotide T21 (28 aa).

The cyclopeptide (Asp-Asn) cross-link spans 1-28 (DLQCAETCVHSPCIGPCYCKHGLICYRN). Cystine bridges form between C4/C17, C8/C19, and C13/C25.

In terms of processing, contains 3 disulfide bonds. Post-translationally, this is a cyclic peptide. Expressed in root nodules but not in seed.

In terms of biological role, probably participates in a plant defense mechanism. Not active against Gram-negative bacterium E.coli ATCC 700926 or Gram-positive bacterium S.aureus ATCC 12600 up to a concentration of 100 uM under low-salt conditions. This chain is Cliotide T21, found in Clitoria ternatea (Butterfly pea).